A 141-amino-acid chain; its full sequence is Hemoglobin subunit alpha (141 aa).

A Globin domain is found at 1-141 (VLSDNDKTNV…VSTVLTSKYR (141 aa)). At Ser-3 the chain carries Phosphoserine. Lys-7 is modified (N6-succinyllysine). Thr-8 is subject to Phosphothreonine. Lys-11 carries the post-translational modification N6-succinyllysine. At Lys-16 the chain carries N6-acetyllysine; alternate. Lys-16 carries the N6-succinyllysine; alternate modification. Position 24 is a phosphotyrosine (Tyr-24). Position 35 is a phosphoserine (Ser-35). The residue at position 40 (Lys-40) is an N6-succinyllysine. O2 is bound at residue His-58. A heme b-binding site is contributed by His-87. A Phosphoserine modification is found at Ser-102. Phosphothreonine is present on Thr-108. Ser-124 carries the phosphoserine modification. Residues Thr-134 and Thr-137 each carry the phosphothreonine modification. Phosphoserine is present on Ser-138.

Belongs to the globin family. As to quaternary structure, heterotetramer of two alpha chains and two beta chains. Red blood cells.

In terms of biological role, involved in oxygen transport from the lung to the various peripheral tissues. Its function is as follows. Hemopressin acts as an antagonist peptide of the cannabinoid receptor CNR1. Hemopressin-binding efficiently blocks cannabinoid receptor CNR1 and subsequent signaling. The protein is Hemoglobin subunit alpha (HBA) of Loxodonta africana (African elephant).